A 482-amino-acid polypeptide reads, in one-letter code: Bifunctional protein GlmU (482 aa).

Residues 1-238 (MSAIRPAAVV…HREIAGINNR (238 aa)) are pyrophosphorylase. UDP-N-acetyl-alpha-D-glucosamine contacts are provided by residues 12-15 (LAAG), Lys-26, Gln-79, and 84-85 (GT). Asp-110 contacts Mg(2+). UDP-N-acetyl-alpha-D-glucosamine-binding residues include Gly-147, Glu-163, Asn-178, and Asn-236. Residue Asn-236 participates in Mg(2+) binding. The segment at 239–259 (VQLAEARRILNDRLLTGAMLA) is linker. An N-acetyltransferase region spans residues 260–482 (GVTVVDPATT…AVSREADGED (223 aa)). Positions 341 and 359 each coordinate UDP-N-acetyl-alpha-D-glucosamine. Residue His-371 is the Proton acceptor of the active site. The UDP-N-acetyl-alpha-D-glucosamine site is built by Tyr-374 and Asn-385. Acetyl-CoA-binding positions include Ala-388, 394-395 (NY), Ser-413, Ala-431, and Arg-448. Positions 460–482 (RKRPGSAAAKAAEAVSREADGED) are disordered. The segment covering 464–473 (GSAAAKAAEA) has biased composition (low complexity).

It in the N-terminal section; belongs to the N-acetylglucosamine-1-phosphate uridyltransferase family. This sequence in the C-terminal section; belongs to the transferase hexapeptide repeat family. As to quaternary structure, homotrimer. Requires Mg(2+) as cofactor.

It is found in the cytoplasm. It carries out the reaction alpha-D-glucosamine 1-phosphate + acetyl-CoA = N-acetyl-alpha-D-glucosamine 1-phosphate + CoA + H(+). The catalysed reaction is N-acetyl-alpha-D-glucosamine 1-phosphate + UTP + H(+) = UDP-N-acetyl-alpha-D-glucosamine + diphosphate. Its pathway is nucleotide-sugar biosynthesis; UDP-N-acetyl-alpha-D-glucosamine biosynthesis; N-acetyl-alpha-D-glucosamine 1-phosphate from alpha-D-glucosamine 6-phosphate (route II): step 2/2. It functions in the pathway nucleotide-sugar biosynthesis; UDP-N-acetyl-alpha-D-glucosamine biosynthesis; UDP-N-acetyl-alpha-D-glucosamine from N-acetyl-alpha-D-glucosamine 1-phosphate: step 1/1. It participates in bacterial outer membrane biogenesis; LPS lipid A biosynthesis. Its function is as follows. Catalyzes the last two sequential reactions in the de novo biosynthetic pathway for UDP-N-acetylglucosamine (UDP-GlcNAc). The C-terminal domain catalyzes the transfer of acetyl group from acetyl coenzyme A to glucosamine-1-phosphate (GlcN-1-P) to produce N-acetylglucosamine-1-phosphate (GlcNAc-1-P), which is converted into UDP-GlcNAc by the transfer of uridine 5-monophosphate (from uridine 5-triphosphate), a reaction catalyzed by the N-terminal domain. This is Bifunctional protein GlmU from Streptomyces coelicolor (strain ATCC BAA-471 / A3(2) / M145).